A 689-amino-acid polypeptide reads, in one-letter code: Glycine--tRNA ligase beta subunit (689 aa).

It belongs to the class-II aminoacyl-tRNA synthetase family. Tetramer of two alpha and two beta subunits.

It localises to the cytoplasm. The enzyme catalyses tRNA(Gly) + glycine + ATP = glycyl-tRNA(Gly) + AMP + diphosphate. This chain is Glycine--tRNA ligase beta subunit, found in Aeromonas salmonicida (strain A449).